The sequence spans 177 residues: Protein C (177 aa).

Residues 1-10 (MSTKAWNASR) show a composition bias toward polar residues. The disordered stretch occupies residues 1–37 (MSTKAWNASRLSGPDPSTPWSLKKPLQHGSRPPKGKR).

This sequence belongs to the morbillivirus protein C family.

The chain is Protein C (P/V/C) from Bos indicus (Zebu).